Here is a 66-residue protein sequence, read N- to C-terminus: Opicalcin-1 (66 aa).

The signal sequence occupies residues 1 to 22 (MKPSLIIVTFIVVFMAISCVAA). Positions 23–31 (DDEQETWIE) are excised as a propeptide. Disulfide bonds link cysteine 36/cysteine 50, cysteine 43/cysteine 54, and cysteine 49/cysteine 65. The tract at residues 55–57 (KRR) is essential for stimulation of [3H]ryanodine binding to RYR1.

This sequence belongs to the scorpion calcin family. As to expression, expressed by the venom gland.

It is found in the secreted. In terms of biological role, this toxin stabilizes ryanodine receptor 1 (RyR1) opening in a long-lasting subconductance state (35% of the full conductance state). Furthermore, it triggers calcium release from sarcoplasmic vesicles (2 nM are enough to induce a sharp release, and 67% of the total calcium is released after toxin (100 nM) addition) probably by acting as a cell-penetrating peptide (CPP). In addition, it has been shown to dose-dependently stimulate ryanodine binding to RyR1 (EC(50)=0.3 nM). It also augments the bell-shaped calcium-[3H]ryanodine binding curve that is maximal at about 10 uM calcium concentration. It binds a different site as ryanodine. It acts synergistically with caffeine. In vivo, intracerebroventricular injection into mice induces neurotoxic symptoms, followed by death. The protein is Opicalcin-1 of Opistophthalmus carinatus (African yellow leg scorpion).